The following is a 117-amino-acid chain: uncharacterized protein (117 aa).

An N-terminal signal peptide occupies residues 1–20 (MAAVHLYIISFTALMISSTS).

This is an uncharacterized protein from Saccharomyces cerevisiae (strain ATCC 204508 / S288c) (Baker's yeast).